The primary structure comprises 262 residues: Acyl-[acyl-carrier-protein]--UDP-N-acetylglucosamine O-acyltransferase (262 aa).

This sequence belongs to the transferase hexapeptide repeat family. LpxA subfamily. In terms of assembly, homotrimer.

It localises to the cytoplasm. It catalyses the reaction a (3R)-hydroxyacyl-[ACP] + UDP-N-acetyl-alpha-D-glucosamine = a UDP-3-O-[(3R)-3-hydroxyacyl]-N-acetyl-alpha-D-glucosamine + holo-[ACP]. It functions in the pathway glycolipid biosynthesis; lipid IV(A) biosynthesis; lipid IV(A) from (3R)-3-hydroxytetradecanoyl-[acyl-carrier-protein] and UDP-N-acetyl-alpha-D-glucosamine: step 1/6. In terms of biological role, involved in the biosynthesis of lipid A, a phosphorylated glycolipid that anchors the lipopolysaccharide to the outer membrane of the cell. This chain is Acyl-[acyl-carrier-protein]--UDP-N-acetylglucosamine O-acyltransferase, found in Pectobacterium atrosepticum (strain SCRI 1043 / ATCC BAA-672) (Erwinia carotovora subsp. atroseptica).